The following is a 125-amino-acid chain: Small ribosomal subunit protein bS6 (125 aa).

The segment at 99–125 is disordered; the sequence is ASPMVKAREERKPLTEVENNDFEDAEE. Residues 104–113 are compositionally biased toward basic and acidic residues; it reads KAREERKPLT. Residues 116 to 125 show a composition bias toward acidic residues; sequence ENNDFEDAEE.

The protein belongs to the bacterial ribosomal protein bS6 family.

In terms of biological role, binds together with bS18 to 16S ribosomal RNA. The sequence is that of Small ribosomal subunit protein bS6 from Histophilus somni (strain 2336) (Haemophilus somnus).